The sequence spans 395 residues: Protochlorophyllide reductase B, chloroplastic (395 aa).

The transit peptide at 1 to 59 (MALQAATSFLPSALSARKEGAAKDSAFFGVRLADGLKLDATSLGLRTKRVNTSSVAIRA) directs the protein to the chloroplast.

Belongs to the short-chain dehydrogenases/reductases (SDR) family. POR subfamily.

Its subcellular location is the plastid. It localises to the chloroplast. It catalyses the reaction chlorophyllide a + NADP(+) = protochlorophyllide a + NADPH + H(+). The protein operates within porphyrin-containing compound metabolism; chlorophyll biosynthesis. Functionally, phototransformation of protochlorophyllide (Pchlide) to chlorophyllide (Chlide). The polypeptide is Protochlorophyllide reductase B, chloroplastic (PORB) (Hordeum vulgare (Barley)).